The chain runs to 467 residues: H(+)/Cl(-) exchange transporter ClcA (467 aa).

Topologically, residues methionine 1–proline 30 are cytoplasmic. Residues phenylalanine 31–arginine 67 form a helical membrane-spanning segment. Residues serine 68–leucine 74 are Periplasmic-facing. A helical membrane pass occupies residues proline 75–phenylalanine 98. Positions glycine 104–proline 108 match the Selectivity filter part_1 motif. Serine 105 is a binding site for chloride. The helical intramembrane region spans isoleucine 107–methionine 114. Residues aspartate 115–arginine 121 lie on the Cytoplasmic side of the membrane. A run of 2 helical transmembrane segments spans residues tryptophan 122–serine 139 and glutamate 146–phenylalanine 164. A Selectivity filter part_2 motif is present at residues glycine 144–proline 148. The Cytoplasmic segment spans residues arginine 165–serine 174. Intramembrane regions (helical) lie at residues leucine 175–alanine 187 and proline 191–valine 199. Over glutamate 200–serine 212 the chain is Cytoplasmic. Residues isoleucine 213–isoleucine 230 form a helical membrane-spanning segment. Residues asparagine 231–leucine 250 lie on the Periplasmic side of the membrane. A helical membrane pass occupies residues tryptophan 251–valine 279. Residues alanine 280 to aspartate 285 lie on the Cytoplasmic side of the membrane. Residues arginine 286–valine 307 traverse the membrane as a helical segment. Over proline 308–serine 327 the chain is Periplasmic. 2 helical membrane-spanning segments follow: residues isoleucine 328–glycine 347 and glycine 353–aspartate 374. The short motif at glycine 353 to proline 357 is the Selectivity filter part_3 element. 2 residues coordinate chloride: isoleucine 354 and phenylalanine 355. At valine 375–proline 384 the chain is on the periplasmic side. Positions glycine 385 to threonine 399 form an intramembrane region, helical. Residues valine 400 to alanine 402 constitute an intramembrane region (note=Loop between two helices). An intramembrane region (helical) is located at residues proline 403 to threonine 414. The segment at residues asparagine 415–leucine 419 is an intramembrane region (note=Loop between two helices). A helical transmembrane segment spans residues isoleucine 420–leucine 436. Residues leucine 437 to serine 467 lie on the Cytoplasmic side of the membrane. Tyrosine 443 provides a ligand contact to chloride.

It belongs to the chloride channel (TC 2.A.49) family. ClcA subfamily. Homodimer.

The protein localises to the cell inner membrane. The catalysed reaction is 2 chloride(in) + H(+)(out) = 2 chloride(out) + H(+)(in). Proton-coupled chloride transporter. Functions as antiport system and exchanges two chloride ions for 1 proton. Probably acts as an electrical shunt for an outwardly-directed proton pump that is linked to amino acid decarboxylation, as part of the extreme acid resistance (XAR) response. The sequence is that of H(+)/Cl(-) exchange transporter ClcA from Vibrio parahaemolyticus serotype O3:K6 (strain RIMD 2210633).